A 351-amino-acid chain; its full sequence is Protein-glutamate methylesterase/protein-glutamine glutaminase 2 (351 aa).

The Response regulatory domain occupies arginine 5–leucine 122. Aspartate 56 bears the 4-aspartylphosphate mark. In terms of domain architecture, CheB-type methylesterase spans leucine 154–leucine 341. Catalysis depends on residues serine 166, histidine 192, and aspartate 289.

It belongs to the CheB family. In terms of processing, phosphorylated by CheA. Phosphorylation of the N-terminal regulatory domain activates the methylesterase activity.

It localises to the cytoplasm. The enzyme catalyses [protein]-L-glutamate 5-O-methyl ester + H2O = L-glutamyl-[protein] + methanol + H(+). The catalysed reaction is L-glutaminyl-[protein] + H2O = L-glutamyl-[protein] + NH4(+). Its function is as follows. Involved in chemotaxis. Part of a chemotaxis signal transduction system that modulates chemotaxis in response to various stimuli. Catalyzes the demethylation of specific methylglutamate residues introduced into the chemoreceptors (methyl-accepting chemotaxis proteins or MCP) by CheR. Also mediates the irreversible deamidation of specific glutamine residues to glutamic acid. This chain is Protein-glutamate methylesterase/protein-glutamine glutaminase 2, found in Bordetella avium (strain 197N).